The chain runs to 444 residues: Ribosomal protein uS12 methylthiotransferase RimO (444 aa).

In terms of domain architecture, MTTase N-terminal spans 4 to 118; it reads YKIGLISLGC…IQNYIDDFFN (115 aa). 6 residues coordinate [4Fe-4S] cluster: cysteine 13, cysteine 48, cysteine 81, cysteine 155, cysteine 159, and cysteine 162. The Radical SAM core domain occupies 141-371; sequence TTAKHMAYIR…MSIQQNVSSK (231 aa). The TRAM domain maps to 374–440; it reads KNKLEKVYKV…EYDLIGVVCD (67 aa).

The protein belongs to the methylthiotransferase family. RimO subfamily. [4Fe-4S] cluster serves as cofactor.

Its subcellular location is the cytoplasm. It catalyses the reaction L-aspartate(89)-[ribosomal protein uS12]-hydrogen + (sulfur carrier)-SH + AH2 + 2 S-adenosyl-L-methionine = 3-methylsulfanyl-L-aspartate(89)-[ribosomal protein uS12]-hydrogen + (sulfur carrier)-H + 5'-deoxyadenosine + L-methionine + A + S-adenosyl-L-homocysteine + 2 H(+). Functionally, catalyzes the methylthiolation of an aspartic acid residue of ribosomal protein uS12. The sequence is that of Ribosomal protein uS12 methylthiotransferase RimO from Clostridium novyi (strain NT).